A 313-amino-acid polypeptide reads, in one-letter code: D-alanine--D-alanine ligase (313 aa).

The ATP-grasp domain occupies 108–308 (KLVWQQTGVP…YSELVVKVLS (201 aa)). ATP is bound at residue 138 to 193 (VAKLGLPLFVKPASEGSSVAVLKVKTADALPAALAEAATHDKIVIVEKSIEGGGEY). Mg(2+)-binding residues include aspartate 262, glutamate 275, and asparagine 277.

Belongs to the D-alanine--D-alanine ligase family. The cofactor is Mg(2+). Mn(2+) is required as a cofactor.

The protein resides in the cytoplasm. It catalyses the reaction 2 D-alanine + ATP = D-alanyl-D-alanine + ADP + phosphate + H(+). It participates in cell wall biogenesis; peptidoglycan biosynthesis. Cell wall formation. This is D-alanine--D-alanine ligase from Burkholderia orbicola (strain MC0-3).